Here is a 248-residue protein sequence, read N- to C-terminus: tRNA pseudouridine synthase A (248 aa).

Residue aspartate 53 is the Nucleophile of the active site. Substrate is bound at residue tyrosine 111.

It belongs to the tRNA pseudouridine synthase TruA family. In terms of assembly, homodimer.

It carries out the reaction uridine(38/39/40) in tRNA = pseudouridine(38/39/40) in tRNA. Its function is as follows. Formation of pseudouridine at positions 38, 39 and 40 in the anticodon stem and loop of transfer RNAs. The protein is tRNA pseudouridine synthase A of Listeria monocytogenes serovar 1/2a (strain ATCC BAA-679 / EGD-e).